The following is a 386-amino-acid chain: Cytochrome b (386 aa).

4 consecutive transmembrane segments (helical) span residues 32-52, 76-98, 113-133, and 179-199; these read FGSLLALCLIIQIVTGVTLAM, WLIRYLHANTASAFFFLVYLHVG, TWIIGSIILIVMMATAFLGYV, and FFALHFVLPFVLAALVIMHLI. The heme b site is built by His82 and His96. Residues His183 and His197 each coordinate heme b. An a ubiquinone-binding site is contributed by His202. Transmembrane regions (helical) follow at residues 226 to 246, 290 to 310, 322 to 342, and 349 to 369; these read YIFKDLITIFLFFFVLSLFVF, LLGVIAMFSAILIILVMPITD, LSKVAFYVFVANFLILMQLGA, and FIEFGQISTVLYFSHFLVIMP.

The protein belongs to the cytochrome b family. In terms of assembly, fungal cytochrome b-c1 complex contains 10 subunits; 3 respiratory subunits, 2 core proteins and 5 low-molecular weight proteins. Cytochrome b-c1 complex is a homodimer. Heme b serves as cofactor.

It localises to the mitochondrion inner membrane. In terms of biological role, component of the ubiquinol-cytochrome c reductase complex (complex III or cytochrome b-c1 complex) that is part of the mitochondrial respiratory chain. The b-c1 complex mediates electron transfer from ubiquinol to cytochrome c. Contributes to the generation of a proton gradient across the mitochondrial membrane that is then used for ATP synthesis. The chain is Cytochrome b (cob) from Talaromyces marneffei (Penicillium marneffei).